Reading from the N-terminus, the 389-residue chain is Succinate--CoA ligase [ADP-forming] subunit beta (389 aa).

Positions 9-246 (KEILRRHNAN…ITEEDPYEVK (238 aa)) constitute an ATP-grasp domain. Residues K48, 55–57 (GRG), E101, L104, and E109 contribute to the ATP site. Mg(2+)-binding residues include N201 and D215. Substrate contacts are provided by residues N266 and 323-325 (GIV).

This sequence belongs to the succinate/malate CoA ligase beta subunit family. As to quaternary structure, heterotetramer of two alpha and two beta subunits. Mg(2+) serves as cofactor.

It catalyses the reaction succinate + ATP + CoA = succinyl-CoA + ADP + phosphate. The catalysed reaction is GTP + succinate + CoA = succinyl-CoA + GDP + phosphate. It functions in the pathway carbohydrate metabolism; tricarboxylic acid cycle; succinate from succinyl-CoA (ligase route): step 1/1. Functionally, succinyl-CoA synthetase functions in the citric acid cycle (TCA), coupling the hydrolysis of succinyl-CoA to the synthesis of either ATP or GTP and thus represents the only step of substrate-level phosphorylation in the TCA. The beta subunit provides nucleotide specificity of the enzyme and binds the substrate succinate, while the binding sites for coenzyme A and phosphate are found in the alpha subunit. This Leptospira biflexa serovar Patoc (strain Patoc 1 / Ames) protein is Succinate--CoA ligase [ADP-forming] subunit beta.